Reading from the N-terminus, the 241-residue chain is Xyloglucan-specific endo-beta-1,4-glucanase 1 (241 aa).

An N-terminal signal peptide occupies residues 1–19; that stretch reads MKGLLAGTIAAATFAVASA. Glu-136 is a catalytic residue. 2 N-linked (GlcNAc...) asparagine glycosylation sites follow: Asn-174 and Asn-190. Glu-222 is a catalytic residue.

The protein belongs to the glycosyl hydrolase 12 (cellulase H) family. Interacts with host apoplastic glucanase inhibitor GIP2.

It carries out the reaction xyloglucan + H2O = xyloglucan oligosaccharides.. The xyloglucanase activity is inhibited by the binding of the host apoplastic glucanase inhibitor GIP2. Its function is as follows. Glycoside hydrolase that exhibits xyloglucanase activity. Acts as an important virulence factor during P.parasitica infection of its host Nicotiana benthamiana. Also acts as a pathogen-associated molecular pattern (PAMP) in host species, where it can trigger defense responses including cell death. The PAMP activity is independent of its xyloglucanase activity. With paralog XLP1, is required to elevate apoplastic sugar during P.parasitica infection. This Phytophthora nicotianae (strain INRA-310) (Phytophthora parasitica) protein is Xyloglucan-specific endo-beta-1,4-glucanase 1.